The following is a 258-amino-acid chain: Hydroxyethylthiazole kinase (258 aa).

Met37 provides a ligand contact to substrate. Residues Arg112 and Thr158 each contribute to the ATP site. Residue Ala185 coordinates substrate.

Belongs to the Thz kinase family. Mg(2+) is required as a cofactor.

The enzyme catalyses 5-(2-hydroxyethyl)-4-methylthiazole + ATP = 4-methyl-5-(2-phosphooxyethyl)-thiazole + ADP + H(+). It participates in cofactor biosynthesis; thiamine diphosphate biosynthesis; 4-methyl-5-(2-phosphoethyl)-thiazole from 5-(2-hydroxyethyl)-4-methylthiazole: step 1/1. Catalyzes the phosphorylation of the hydroxyl group of 4-methyl-5-beta-hydroxyethylthiazole (THZ). The chain is Hydroxyethylthiazole kinase from Rhizobium etli (strain ATCC 51251 / DSM 11541 / JCM 21823 / NBRC 15573 / CFN 42).